The primary structure comprises 334 residues: Hydroxyproline O-arabinosyltransferase NOD3 (334 aa).

Residues 1 to 18 (LLMVLGFFFATYNLVSMI) form a helical; Signal-anchor membrane-spanning segment.

It belongs to the RDN family.

The protein resides in the golgi apparatus membrane. It carries out the reaction trans-4-hydroxy-L-prolyl-[protein] + UDP-beta-L-arabinofuranose = O-(beta-L-arabinofuranosyl)-trans-4-hydroxy-L-prolyl-[protein] + UDP + H(+). Its function is as follows. Probable glycosyltransferase involved in the O-arabinosylation of several proteins including extensins and small signaling peptides. Catalyzes the transfer of the initial L-arabinose to the hydroxyl group of Hyp residues. Probably involved in the arabinosylation of CLAVATA3/ESR-related (CLE) signaling peptides that move from root to shoot, to interact with receptor kinase signaling that regulates nodulation. Involved in long distance nodulation signaling events. Involved in the autoregulation of nodulation (AON), a long distance systemic signaling from root to shoot and back again, which allows legumes to limit the number of root nodules formed based on available nitrogen and previous rhizobial colonization. This is Hydroxyproline O-arabinosyltransferase NOD3 from Pisum sativum (Garden pea).